A 156-amino-acid chain; its full sequence is Small ribosomal subunit protein uS7 (156 aa).

The protein belongs to the universal ribosomal protein uS7 family. As to quaternary structure, part of the 30S ribosomal subunit. Contacts proteins S9 and S11.

Functionally, one of the primary rRNA binding proteins, it binds directly to 16S rRNA where it nucleates assembly of the head domain of the 30S subunit. Is located at the subunit interface close to the decoding center, probably blocks exit of the E-site tRNA. The sequence is that of Small ribosomal subunit protein uS7 from Treponema denticola (strain ATCC 35405 / DSM 14222 / CIP 103919 / JCM 8153 / KCTC 15104).